The primary structure comprises 105 residues: uncharacterized protein (105 aa).

This sequence belongs to the baculoviridae 11 kDa protein family.

This is an uncharacterized protein from Autographa californica nuclear polyhedrosis virus (AcMNPV).